The following is a 126-amino-acid chain: Methylglyoxal synthase (126 aa).

Residues 1–126 (MAERQKIALI…ADRLLPVITE (126 aa)) enclose the MGS-like domain. Substrate is bound by residues H12, K16, 38–41 (TGTT), and 59–60 (SG). Catalysis depends on D65, which acts as the Proton donor/acceptor. A substrate-binding site is contributed by H92.

It belongs to the methylglyoxal synthase family.

It catalyses the reaction dihydroxyacetone phosphate = methylglyoxal + phosphate. Catalyzes the formation of methylglyoxal from dihydroxyacetone phosphate. The polypeptide is Methylglyoxal synthase (Allorhizobium ampelinum (strain ATCC BAA-846 / DSM 112012 / S4) (Agrobacterium vitis (strain S4))).